A 190-amino-acid chain; its full sequence is Potassium-transporting ATPase KdpC subunit (190 aa).

The helical transmembrane segment at 11 to 31 threads the bilayer; sequence LIVLMSLITGVAYPLVVTGVA.

This sequence belongs to the KdpC family. As to quaternary structure, the system is composed of three essential subunits: KdpA, KdpB and KdpC.

It localises to the cell inner membrane. Part of the high-affinity ATP-driven potassium transport (or Kdp) system, which catalyzes the hydrolysis of ATP coupled with the electrogenic transport of potassium into the cytoplasm. This subunit acts as a catalytic chaperone that increases the ATP-binding affinity of the ATP-hydrolyzing subunit KdpB by the formation of a transient KdpB/KdpC/ATP ternary complex. This Pseudomonas savastanoi pv. phaseolicola (strain 1448A / Race 6) (Pseudomonas syringae pv. phaseolicola (strain 1448A / Race 6)) protein is Potassium-transporting ATPase KdpC subunit.